The chain runs to 96 residues: Co-chaperonin GroES (96 aa).

This sequence belongs to the GroES chaperonin family. In terms of assembly, heptamer of 7 subunits arranged in a ring. Interacts with the chaperonin GroEL.

The protein localises to the cytoplasm. In terms of biological role, together with the chaperonin GroEL, plays an essential role in assisting protein folding. The GroEL-GroES system forms a nano-cage that allows encapsulation of the non-native substrate proteins and provides a physical environment optimized to promote and accelerate protein folding. GroES binds to the apical surface of the GroEL ring, thereby capping the opening of the GroEL channel. The chain is Co-chaperonin GroES from Acinetobacter baylyi (strain ATCC 33305 / BD413 / ADP1).